The primary structure comprises 427 residues: Transcriptional enhancer factor TEF-3 (427 aa).

A disordered region spans residues 1–32 (MTSNEWSSPDSPEGSSISGGSQALDKPIDNDA). Residues 7 to 21 (SSPDSPEGSSISGGS) show a composition bias toward low complexity. The segment at residues 29–105 (DNDAEGVWSP…QVLARRKARE (77 aa)) is a DNA-binding region (TEA). A Nuclear localization signal motif is present at residues 78 to 94 (IKLRTGKTRTRKQVSSH). The interval 163–206 (QPGTSHDVKPFSQNTYPVQPPLPLPGFESPAGPTPSPSAPLAPP) is disordered. The span at 194–205 (GPTPSPSAPLAP) shows a compositional bias: pro residues.

In terms of assembly, interacts with WWTR1/TAZ. Interacts with YAP1. As to expression, preferentially expressed in lung and in skeletal muscle.

The protein resides in the nucleus. Transcription factor which plays a key role in the Hippo signaling pathway, a pathway involved in organ size control and tumor suppression by restricting proliferation and promoting apoptosis. The core of this pathway is composed of a kinase cascade wherein MST1/MST2, in complex with its regulatory protein SAV1, phosphorylates and activates LATS1/2 in complex with its regulatory protein MOB1, which in turn phosphorylates and inactivates YAP1 oncoprotein and WWTR1/TAZ. Acts by mediating gene expression of YAP1 and WWTR1/TAZ, thereby regulating cell proliferation, migration and epithelial mesenchymal transition (EMT) induction. Binds specifically and non-cooperatively to the Sph and GT-IIC 'enhansons' (5'-GTGGAATGT-3') and activates transcription. Binds to the M-CAT motif. Might play a role in the embryonic development of skeletal muscle. This is Transcriptional enhancer factor TEF-3 (Tead4) from Mus musculus (Mouse).